Here is an 833-residue protein sequence, read N- to C-terminus: MTDSVIRIKRYYYIHILDNNTNVTRTISGPVVYTRQEHETCLFDPRPCVSVPPRHYCVVKNPCVRNEAGEVVLESSGQVKLRLGDAEIRFEGEPFPLYPGEELDSKEEQSVRKLQVIPPNTGLHVRCVRDFKDAERLVVAGTEWMVAGPQSYIPRVEVAVVEEVKATVIYPNTALLLQANVNFTDRRGVLRVAGEKWLVRTLGAYLPSVEETVVSLIQGTMLSELKALRLSAVRSFTDVYGKARRAGEQWQVTLKDAPVHIVDAYETKVAEVAAVSLNAKEYVIIHHPVDATGHNRFGETLVRRGECTFFLQPEETMPRGVEQVLVVGKEEALLLEAVCEYHDGGGKHQPGSRWMVRGPCEYIPANEVKLLEHRRVMALDRNEGIYVMNTTTGEVRAVIGKPYMLDSNEVLWEKHLPLAIEELLESPNGSIKTCERNAGFVSRREKYRIVRFNVQHNAAVQIYDYRTKKPRIVLGPSLVMLAPHEEFTVLSLSGGTPKVPNSMQSLQLFLGPRFSSDTIVVETSDHARLRLRLSYNWYFDIDRANPSQRTFSVPDFIGDCCKTIASRVRGAVAAEDFDSFHRNSAKIIRIAVFGVDEVGEAKKNLRFNANDFVVTNIDVQSAEPTDEKTRDSLQKSVQLAIEITTKSQEAAARHGNELKNQEAKGHLERQKLIDKIEVENARTKWLELQAKSEAVQASGQSIAEAKARAEALLIEVQSEMQQAEMRAKAYRISAEAELQKLQQRQALELEYTQRQNEIDVAKARAAAEAEAEKVRRMVDAIGRDTLVAIARAGPEAQVKLLGSLGLKGYLITDGNSPVNLFDAAHGMIGEPKK.

MVP repeat units follow at residues 10 to 52, 54 to 115, 119 to 170, 171 to 223, 224 to 278, 280 to 328, 329 to 380, and 381 to 433; these read RYYY…VSVP, RHYC…RKLQ, PNTG…TVIY, PNTA…TMLS, ELKA…VSLN, KEYV…LVVG, KEEA…MALD, and RNEG…SIKT.

In terms of assembly, the vault ribonucleoprotein particle is a huge (400 A x 670 A) cage structure of 12.9 MDa. It consists of a dimer of half-vaults, with each half-vault comprising 39 identical major vault protein (MVP) chains, PARP4 and one or more vault RNAs (vRNAs).

The protein resides in the cytoplasm. The protein localises to the nucleus. In terms of biological role, required for normal vault structure. Vaults are multi-subunit structures that may act as scaffolds for proteins involved in signal transduction. Vaults may also play a role in nucleo-cytoplasmic transport. This is Major vault protein from Leishmania braziliensis.